The primary structure comprises 419 residues: Keratin, type II cytoskeletal I (419 aa).

A linker 1 region spans residues 1-16 (KGSTKRANLDPLFEKY). The region spanning 1 to 275 (KGSTKRANLD…YMLEGEEGRM (275 aa)) is the IF rod domain. Positions 17–108 (ISDLKRYLDN…TLFAAELSQV (92 aa)) are coil 1B. The tract at residues 109-132 (HDQVTDTSVVLTMDNNRDLNLDSI) is linker 12. The interval 133-271 (IKEVKCQYEQ…STYRYMLEGE (139 aa)) is coil 2. Residues 272 to 419 (EGRMSGQISN…STTSTTKRSY (148 aa)) form a tail region.

The protein belongs to the intermediate filament family. In terms of assembly, heterotetramer of two type I and two type II keratins.

This is Keratin, type II cytoskeletal I from Xenopus laevis (African clawed frog).